The primary structure comprises 630 residues: Zinc finger protein MSN4 (630 aa).

Residue Met1 is modified to N-acetylmethionine. The segment covering 37 to 56 (TTNVSATSSNDNSANNSISS) has biased composition (low complexity). Disordered regions lie at residues 37 to 77 (TTNV…ATNT) and 115 to 137 (FVNDGEKQSSNANGKKNGGDKIY). Ser178 carries the phosphoserine modification. A 9aaTAD motif is present at residues 237–245 (SILEDFVSS). Position 263 is a phosphoserine (Ser263). Positions 292–303 (KNSSNSKPTQQI) are enriched in polar residues. 2 disordered regions span residues 292–322 (KNSSNSKPTQQIIPEGTATTERRGSTISPTT) and 360–379 (SISSSLNRISHSSSTTRQQR). Ser316 and Ser319 each carry phosphoserine. Residues 360-373 (SISSSLNRISHSSS) show a composition bias toward low complexity. Thr479 bears the Phosphothreonine mark. Positions 502 to 566 (TSQAHHAAQH…KSITTIDPNN (65 aa)) are disordered. Over residues 504–515 (QAHHAAQHHQQQ) the composition is skewed to low complexity. 2 stretches are compositionally biased toward polar residues: residues 516–525 (PTKQATVSPN) and 532–547 (SSVTLSPTISHNNNNG). Ser558 carries the phosphoserine modification. C2H2-type zinc fingers lie at residues 573–596 (FKCKDCEKAFRRSEHLKRHIRSVH) and 602–624 (FACMFCEKKFSRSDNLSQHLKTH).

It localises to the cytoplasm. It is found in the nucleus. Positive transcriptional factor that acts as a component of the stress responsive system. Recognizes and binds to the stress response element (STRE) which is involved in the response to various forms of stress (heat, oxidative, osmotic, etc.). Involved in the regulation of the CTT1, DDR2, HSP12 genes. This Saccharomyces cerevisiae (strain ATCC 204508 / S288c) (Baker's yeast) protein is Zinc finger protein MSN4 (MSN4).